Consider the following 101-residue polypeptide: Small ribosomal subunit protein uS14 (101 aa).

Residues 32–67 (SDAKRSDEEREAARLGLQKLPRNANPTRQRNRCEIT) are disordered. Over residues 33-44 (DAKRSDEEREAA) the composition is skewed to basic and acidic residues.

It belongs to the universal ribosomal protein uS14 family. In terms of assembly, part of the 30S ribosomal subunit. Contacts proteins S3 and S10.

Its function is as follows. Binds 16S rRNA, required for the assembly of 30S particles and may also be responsible for determining the conformation of the 16S rRNA at the A site. The polypeptide is Small ribosomal subunit protein uS14 (Paracidovorax citrulli (strain AAC00-1) (Acidovorax citrulli)).